Consider the following 115-residue polypeptide: NAD(P)H-quinone oxidoreductase subunit M (115 aa).

Belongs to the complex I NdhM subunit family. In terms of assembly, NDH-1 can be composed of about 15 different subunits; different subcomplexes with different compositions have been identified which probably have different functions.

It localises to the cellular thylakoid membrane. It catalyses the reaction a plastoquinone + NADH + (n+1) H(+)(in) = a plastoquinol + NAD(+) + n H(+)(out). The enzyme catalyses a plastoquinone + NADPH + (n+1) H(+)(in) = a plastoquinol + NADP(+) + n H(+)(out). NDH-1 shuttles electrons from an unknown electron donor, via FMN and iron-sulfur (Fe-S) centers, to quinones in the respiratory and/or the photosynthetic chain. The immediate electron acceptor for the enzyme in this species is believed to be plastoquinone. Couples the redox reaction to proton translocation, and thus conserves the redox energy in a proton gradient. Cyanobacterial NDH-1 also plays a role in inorganic carbon-concentration. This chain is NAD(P)H-quinone oxidoreductase subunit M, found in Prochlorococcus marinus (strain MIT 9211).